A 512-amino-acid chain; its full sequence is Bifunctional purine biosynthesis protein PurH (512 aa).

The region spanning 1 to 144 (MKRALVSVSD…KNYRDVVVVV (144 aa)) is the MGS-like domain.

The protein belongs to the PurH family.

The catalysed reaction is (6R)-10-formyltetrahydrofolate + 5-amino-1-(5-phospho-beta-D-ribosyl)imidazole-4-carboxamide = 5-formamido-1-(5-phospho-D-ribosyl)imidazole-4-carboxamide + (6S)-5,6,7,8-tetrahydrofolate. It carries out the reaction IMP + H2O = 5-formamido-1-(5-phospho-D-ribosyl)imidazole-4-carboxamide. It participates in purine metabolism; IMP biosynthesis via de novo pathway; 5-formamido-1-(5-phospho-D-ribosyl)imidazole-4-carboxamide from 5-amino-1-(5-phospho-D-ribosyl)imidazole-4-carboxamide (10-formyl THF route): step 1/1. The protein operates within purine metabolism; IMP biosynthesis via de novo pathway; IMP from 5-formamido-1-(5-phospho-D-ribosyl)imidazole-4-carboxamide: step 1/1. In Ligilactobacillus salivarius (strain UCC118) (Lactobacillus salivarius), this protein is Bifunctional purine biosynthesis protein PurH.